Here is a 300-residue protein sequence, read N- to C-terminus: GTPase Era (300 aa).

One can recognise an Era-type G domain in the interval 8–176 (RCGYVAIVGR…EAQIAKHLPE (169 aa)). Positions 16–23 (GRPNVGKS) are G1. A GTP-binding site is contributed by 16 to 23 (GRPNVGKS). Residues 42-46 (QTTRH) form a G2 region. The tract at residues 63 to 66 (DTPG) is G3. Residues 63 to 67 (DTPGM) and 125 to 128 (NKTD) each bind GTP. The segment at 125-128 (NKTD) is G4. Positions 155-157 (ISA) are G5. The KH type-2 domain maps to 199–283 (VREKIMRQLG…MLNLWVKVKG (85 aa)).

The protein belongs to the TRAFAC class TrmE-Era-EngA-EngB-Septin-like GTPase superfamily. Era GTPase family. Monomer.

It is found in the cytoplasm. Its subcellular location is the cell inner membrane. In terms of biological role, an essential GTPase that binds both GDP and GTP, with rapid nucleotide exchange. Plays a role in 16S rRNA processing and 30S ribosomal subunit biogenesis and possibly also in cell cycle regulation and energy metabolism. The sequence is that of GTPase Era from Pseudomonas entomophila (strain L48).